Consider the following 188-residue polypeptide: MSFSPASSEPHDAPAAAGSSVPASRSIAERWKMEAAPIRARLLLRAFAWLFSLLALVVMATDVHGRGGAQDFSTYPEYNYCLGMSIIALLYATAQLVRDAHRLSSGRDLVAGRKAAAVVDFAGDQVVAYSLISGLSAAAPVTDYMRQATDNLFNDSAAAAISLAFFAFLAISLSALISGYNLSLEAIV.

The interval 1–21 (MSFSPASSEPHDAPAAAGSSV) is disordered. Residues 1–42 (MSFSPASSEPHDAPAAAGSSVPASRSIAERWKMEAAPIRARL) lie on the Cytoplasmic side of the membrane. The helical transmembrane segment at 43-63 (LLRAFAWLFSLLALVVMATDV) threads the bilayer. Residues 64–76 (HGRGGAQDFSTYP) lie on the Extracellular side of the membrane. The helical transmembrane segment at 77-97 (EYNYCLGMSIIALLYATAQLV) threads the bilayer. Over 98-114 (RDAHRLSSGRDLVAGRK) the chain is Cytoplasmic. Residues 115-135 (AAAVVDFAGDQVVAYSLISGL) form a helical membrane-spanning segment. Residues 136-156 (SAAAPVTDYMRQATDNLFNDS) are Extracellular-facing. Asn154 carries N-linked (GlcNAc...) asparagine glycosylation. The chain crosses the membrane as a helical span at residues 157 to 177 (AAAAISLAFFAFLAISLSALI). Over 178–188 (SGYNLSLEAIV) the chain is Cytoplasmic.

Belongs to the Casparian strip membrane proteins (CASP) family. In terms of assembly, homodimer and heterodimers.

Its subcellular location is the cell membrane. The sequence is that of CASP-like protein 4B3 from Hordeum vulgare subsp. vulgare (Domesticated barley).